Reading from the N-terminus, the 70-residue chain is Large ribosomal subunit protein bL28 (70 aa).

It belongs to the bacterial ribosomal protein bL28 family.

In Maridesulfovibrio salexigens (strain ATCC 14822 / DSM 2638 / NCIMB 8403 / VKM B-1763) (Desulfovibrio salexigens), this protein is Large ribosomal subunit protein bL28.